A 196-amino-acid chain; its full sequence is Putative lipopolysaccharide biosynthesis O-acetyl transferase WbbJ (196 aa).

This sequence belongs to the transferase hexapeptide repeat family.

It functions in the pathway bacterial outer membrane biogenesis; lipopolysaccharide biosynthesis. Putative O-acetyltransferase that transfers an O-acetyl group to the O antigen. In Escherichia coli (strain K12), this protein is Putative lipopolysaccharide biosynthesis O-acetyl transferase WbbJ (wbbJ).